A 138-amino-acid polypeptide reads, in one-letter code: Phosphoribosyl-AMP cyclohydrolase (138 aa).

Asp-84 serves as a coordination point for Mg(2+). Zn(2+) is bound at residue Cys-85. Asp-86 and Asp-88 together coordinate Mg(2+). Residues Cys-102 and Cys-109 each contribute to the Zn(2+) site.

This sequence belongs to the PRA-CH family. As to quaternary structure, homodimer. Mg(2+) is required as a cofactor. Zn(2+) serves as cofactor.

The protein resides in the cytoplasm. It carries out the reaction 1-(5-phospho-beta-D-ribosyl)-5'-AMP + H2O = 1-(5-phospho-beta-D-ribosyl)-5-[(5-phospho-beta-D-ribosylamino)methylideneamino]imidazole-4-carboxamide. It participates in amino-acid biosynthesis; L-histidine biosynthesis; L-histidine from 5-phospho-alpha-D-ribose 1-diphosphate: step 3/9. In terms of biological role, catalyzes the hydrolysis of the adenine ring of phosphoribosyl-AMP. The sequence is that of Phosphoribosyl-AMP cyclohydrolase from Burkholderia ambifaria (strain ATCC BAA-244 / DSM 16087 / CCUG 44356 / LMG 19182 / AMMD) (Burkholderia cepacia (strain AMMD)).